A 127-amino-acid chain; its full sequence is uncharacterized protein (127 aa).

This is an uncharacterized protein from Archaeoglobus fulgidus (strain ATCC 49558 / DSM 4304 / JCM 9628 / NBRC 100126 / VC-16).